Consider the following 412-residue polypeptide: Multifunctional CCA protein (412 aa).

ATP contacts are provided by glycine 8 and arginine 11. The CTP site is built by glycine 8 and arginine 11. 2 residues coordinate Mg(2+): aspartate 21 and aspartate 23. ATP is bound by residues arginine 91, arginine 137, and arginine 140. Positions 91, 137, and 140 each coordinate CTP. In terms of domain architecture, HD spans 226-327 (TGIHTMMVID…VTLFEKTDAL (102 aa)).

Belongs to the tRNA nucleotidyltransferase/poly(A) polymerase family. Bacterial CCA-adding enzyme type 1 subfamily. In terms of assembly, monomer. Can also form homodimers and oligomers. It depends on Mg(2+) as a cofactor. Requires Ni(2+) as cofactor.

The enzyme catalyses a tRNA precursor + 2 CTP + ATP = a tRNA with a 3' CCA end + 3 diphosphate. The catalysed reaction is a tRNA with a 3' CCA end + 2 CTP + ATP = a tRNA with a 3' CCACCA end + 3 diphosphate. In terms of biological role, catalyzes the addition and repair of the essential 3'-terminal CCA sequence in tRNAs without using a nucleic acid template. Adds these three nucleotides in the order of C, C, and A to the tRNA nucleotide-73, using CTP and ATP as substrates and producing inorganic pyrophosphate. tRNA 3'-terminal CCA addition is required both for tRNA processing and repair. Also involved in tRNA surveillance by mediating tandem CCA addition to generate a CCACCA at the 3' terminus of unstable tRNAs. While stable tRNAs receive only 3'-terminal CCA, unstable tRNAs are marked with CCACCA and rapidly degraded. This is Multifunctional CCA protein from Dechloromonas aromatica (strain RCB).